A 541-amino-acid polypeptide reads, in one-letter code: Imidazole glycerol phosphate synthase hisHF (541 aa).

The Glutamine amidotransferase type-1 domain maps to 2 to 214; it reads IVSIVDYGSG…LTGNYEQPIS (213 aa). Residues Cys80, His189, and Glu191 each act as for GATase activity in the active site. The cyclase stretch occupies residues 228–541; sequence LTKRIIACLD…LAIHDVLVRT (314 aa). Catalysis depends on residues Asp237 and Asp396.

It in the C-terminal section; belongs to the HisA/HisF family.

It carries out the reaction 5-[(5-phospho-1-deoxy-D-ribulos-1-ylimino)methylamino]-1-(5-phospho-beta-D-ribosyl)imidazole-4-carboxamide + L-glutamine = D-erythro-1-(imidazol-4-yl)glycerol 3-phosphate + 5-amino-1-(5-phospho-beta-D-ribosyl)imidazole-4-carboxamide + L-glutamate + H(+). The enzyme catalyses L-glutamine + H2O = L-glutamate + NH4(+). It participates in amino-acid biosynthesis; L-histidine biosynthesis; L-histidine from 5-phospho-alpha-D-ribose 1-diphosphate: step 5/9. In terms of biological role, IGPS catalyzes the conversion of PRFAR and glutamine to IGP, AICAR and glutamate. The glutaminase domain produces the ammonia necessary for the cyclase domain to produce IGP and AICAR from PRFAR. The ammonia is channeled to the active site of the cyclase domain. The protein is Imidazole glycerol phosphate synthase hisHF (his4) of Schizosaccharomyces pombe (strain 972 / ATCC 24843) (Fission yeast).